The sequence spans 309 residues: Homoserine kinase (309 aa).

91-101 (PIGSGLGSSAC) is an ATP binding site.

Belongs to the GHMP kinase family. Homoserine kinase subfamily.

It localises to the cytoplasm. The enzyme catalyses L-homoserine + ATP = O-phospho-L-homoserine + ADP + H(+). Its pathway is amino-acid biosynthesis; L-threonine biosynthesis; L-threonine from L-aspartate: step 4/5. In terms of biological role, catalyzes the ATP-dependent phosphorylation of L-homoserine to L-homoserine phosphate. In Yersinia pseudotuberculosis serotype O:1b (strain IP 31758), this protein is Homoserine kinase.